A 116-amino-acid polypeptide reads, in one-letter code: Large ribosomal subunit protein bL20 (116 aa).

The protein belongs to the bacterial ribosomal protein bL20 family.

Functionally, binds directly to 23S ribosomal RNA and is necessary for the in vitro assembly process of the 50S ribosomal subunit. It is not involved in the protein synthesizing functions of that subunit. The protein is Large ribosomal subunit protein bL20 of Helicobacter pylori (strain HPAG1).